Consider the following 698-residue polypeptide: Interleukin enhancer-binding factor 3 (698 aa).

The DZF domain maps to 5–379; sequence RIFLNDDRHV…ALKRPMEEDG (375 aa). Disordered stretches follow at residues 51–88, 374–403, and 473–522; these read QQEK…PTRT, PMEE…PPQA, and EEKE…KHGK. Acidic residues predominate over residues 61–71; that stretch reads EQPEPEEPETT. Basic and acidic residues-rich tracts occupy residues 72 to 81 and 374 to 384; these read EEGKDSEGKT and PMEEDGEDKSP. The Bipartite nuclear localization signal motif lies at 372–390; the sequence is KRPMEEDGEDKSPSKKKKK. A DRBM 1 domain is found at 399 to 468; that stretch reads EPPQAMNALM…AVKVLQDMGL (70 aa). The span at 490 to 503 shows a compositional bias: polar residues; it reads TPAQPADSTQTDSA. Positions 520–586 constitute a DRBM 2 domain; sequence HGKNPVMELN…ALAALEKLFP (67 aa).

A component of a ybx2/frgy2-containing mRNA-ribonucleoprotein (mRNP) complex. Also a component of the CCAAT box transcription factor (CBTF) complex. Post-translationally, phosphorylated. Phosphorylation affects nuclear translocation. Methylated by protein arginine N-methyltransferase 1 (prmt1b) in the RGG-rich domain. Methylation decreases DNA-binding and thereby decreases transcription of the gata2 gene, but does not regulate dsRNA binding or subcellular localization.

It localises to the nucleus. The protein localises to the cytoplasm. RNA-binding protein that plays an essential role in the biogenesis of circular RNAs (circRNAs) which are produced by back-splicing circularization of pre-mRNAs. Within the nucleus, promotes circRNAs processing by stabilizing the regulatory elements residing in the flanking introns of the circularized exons. Plays thereby a role in the back-splicing of a subset of circRNAs. As a consequence, participates in a wide range of transcriptional and post-transcriptional processes. Binds to poly-U elements and AU-rich elements (AREs) in the 3'-UTR of target mRNAs. Upon viral infection, ILF3 accumulates in the cytoplasm and participates in the innate antiviral response. Mechanistically, ILF3 becomes phosphorylated and activated by the double-stranded RNA-activated protein kinase/PKR which releases ILF3 from cellular mature circRNAs. In turn, unbound ILF3 molecules are able to interact with and thus inhibit viral mRNAs. Has a cytoplasmic role early in development as part of a ribonucleoprotein (mRNP) complex which may regulate mRNA transport and/or translation. Following nuclear localization at the mid-blastula transition, acts as a transcription factor and binds the 5'-CCAAT-3' promoter sequence to regulate transcription of the gata2 gene as a subunit of the CCAAT box transcription factor (CBTF). Its role as an mRNP component negatively regulates its activity as a transcription factor by precluding its nuclear localization. The chain is Interleukin enhancer-binding factor 3 from Xenopus tropicalis (Western clawed frog).